The sequence spans 496 residues: Cytochrome P450 71D180 (496 aa).

The helical; Signal-anchor for type II membrane protein transmembrane segment at 1 to 21 (MDISISWVVIIVFVLSYLILM) threads the bilayer. Cys435 is a heme binding site. Residues 471-496 (MSETPGLSGPRKNPLIMIPTIHNPTS) form a disordered region.

Belongs to the cytochrome P450 family. The cofactor is heme. Mostly expressed in flowers and stems, and, to a lower extent, in leaves.

The protein resides in the membrane. The enzyme catalyses gamma-terpinene + 2 reduced [NADPH--hemoprotein reductase] + 2 O2 = carvacrol + 2 oxidized [NADPH--hemoprotein reductase] + 3 H2O + 2 H(+). It carries out the reaction (4S)-limonene + reduced [NADPH--hemoprotein reductase] + O2 = (1S,5R)-carveol + oxidized [NADPH--hemoprotein reductase] + H2O + H(+). It catalyses the reaction (4R)-limonene + reduced [NADPH--hemoprotein reductase] + O2 = (1R,5S)-carveol + oxidized [NADPH--hemoprotein reductase] + H2O + H(+). The protein operates within secondary metabolite biosynthesis; terpenoid biosynthesis. Functionally, involved in the biosynthesis of phenolic monoterpenes natural products thymol and carvacrol which have a broad range of biological activities acting as antimicrobial compounds, insecticides, antioxidants and pharmaceutical agents. Catalyzes the C2-hydroxylation of gamma-terpinene to produce carvacrol. Also mediates the C6-hydroxylation of (4S)-limonene and (4R)-limonene to form carveol. In Origanum vulgare (Wild marjoram), this protein is Cytochrome P450 71D180.